Here is a 510-residue protein sequence, read N- to C-terminus: Cytochrome P450 monooxygenase AFLA_114810 (510 aa).

An N-terminal signal peptide occupies residues 1–17 (MLILLGLLCLYTGLYVA). Cysteine 444 provides a ligand contact to heme.

This sequence belongs to the cytochrome P450 family. The cofactor is heme.

It functions in the pathway secondary metabolite biosynthesis. In terms of biological role, cytochrome P450 monooxygenase; part of the gene cluster 41 that mediates the biosynthesis of an extracellular and diffusible metabolite that is able to stimulate colony sclerotial production. The protein is Cytochrome P450 monooxygenase AFLA_114810 of Aspergillus flavus (strain ATCC 200026 / FGSC A1120 / IAM 13836 / NRRL 3357 / JCM 12722 / SRRC 167).